The primary structure comprises 203 residues: Histidine biosynthesis bifunctional protein HisIE (203 aa).

A phosphoribosyl-AMP cyclohydrolase region spans residues 1-114; it reads MLTEQQRREL…FGDTAHQWLF (114 aa). The tract at residues 115-203 is phosphoribosyl-ATP pyrophosphohydrolase; the sequence is LYQLEQLLAE…VIENLRKRHQ (89 aa).

The protein in the N-terminal section; belongs to the PRA-CH family. In the C-terminal section; belongs to the PRA-PH family.

The protein localises to the cytoplasm. The catalysed reaction is 1-(5-phospho-beta-D-ribosyl)-ATP + H2O = 1-(5-phospho-beta-D-ribosyl)-5'-AMP + diphosphate + H(+). It carries out the reaction 1-(5-phospho-beta-D-ribosyl)-5'-AMP + H2O = 1-(5-phospho-beta-D-ribosyl)-5-[(5-phospho-beta-D-ribosylamino)methylideneamino]imidazole-4-carboxamide. It functions in the pathway amino-acid biosynthesis; L-histidine biosynthesis; L-histidine from 5-phospho-alpha-D-ribose 1-diphosphate: step 2/9. It participates in amino-acid biosynthesis; L-histidine biosynthesis; L-histidine from 5-phospho-alpha-D-ribose 1-diphosphate: step 3/9. The chain is Histidine biosynthesis bifunctional protein HisIE (hisI) from Escherichia coli (strain K12).